The chain runs to 157 residues: Nuclear cap-binding protein subunit 2 (157 aa).

MRNA is bound by residues tyrosine 17, tyrosine 40, 109-113 (RADWD), 120-124 (RQYGR), and 130-131 (QV). The region spanning 37 to 115 (CTLYVGNLSY…RVIRADWDAG (79 aa)) is the RRM domain.

It belongs to the RRM NCBP2 family. As to quaternary structure, component of the nuclear cap-binding complex (CBC), a heterodimer composed of ncbp-1 and ncbp-2 that interacts with m7GpppG-capped RNA.

It localises to the nucleus. Component of the cap-binding complex (CBC), which binds co-transcriptionally to the 5' cap of pre-mRNAs and is involved in various processes such as pre-mRNA splicing and RNA-mediated gene silencing (RNAi). The CBC complex is involved in miRNA-mediated RNA interference and is required for primary microRNAs (miRNAs) processing. In the CBC complex, ncbp-2 recognizes and binds capped RNAs (m7GpppG-capped RNA) but requires ncbp-1 to stabilize the movement of its N-terminal loop and lock the CBC into a high affinity cap-binding state with the cap structure. The sequence is that of Nuclear cap-binding protein subunit 2 (ncbp-2) from Caenorhabditis briggsae.